The sequence spans 140 residues: Cysteine desulfuration protein SufE (140 aa).

Cys51 (cysteine persulfide intermediate) is an active-site residue.

It belongs to the SufE family. In terms of assembly, homodimer. Interacts with SufS.

Its subcellular location is the cytoplasm. It functions in the pathway cofactor biosynthesis; iron-sulfur cluster biosynthesis. Participates in cysteine desulfuration mediated by SufS. Cysteine desulfuration mobilizes sulfur from L-cysteine to yield L-alanine and constitutes an essential step in sulfur metabolism for biosynthesis of a variety of sulfur-containing biomolecules. Functions as a sulfur acceptor for SufS, by mediating the direct transfer of the sulfur atom from the S-sulfanylcysteine of SufS, an intermediate product of cysteine desulfuration process. This chain is Cysteine desulfuration protein SufE, found in Yersinia enterocolitica serotype O:8 / biotype 1B (strain NCTC 13174 / 8081).